We begin with the raw amino-acid sequence, 288 residues long: Light-independent protochlorophyllide reductase iron-sulfur ATP-binding protein (288 aa).

Residues 10-15 and lysine 39 contribute to the ATP site; that span reads GIGKST. Position 14 (serine 14) interacts with Mg(2+). 2 residues coordinate [4Fe-4S] cluster: cysteine 95 and cysteine 129. ATP is bound at residue 180 to 181; the sequence is NR.

This sequence belongs to the NifH/BchL/ChlL family. Homodimer. Protochlorophyllide reductase is composed of three subunits; ChlL, ChlN and ChlB. It depends on [4Fe-4S] cluster as a cofactor.

The catalysed reaction is chlorophyllide a + oxidized 2[4Fe-4S]-[ferredoxin] + 2 ADP + 2 phosphate = protochlorophyllide a + reduced 2[4Fe-4S]-[ferredoxin] + 2 ATP + 2 H2O. Its pathway is porphyrin-containing compound metabolism; chlorophyll biosynthesis (light-independent). Component of the dark-operative protochlorophyllide reductase (DPOR) that uses Mg-ATP and reduced ferredoxin to reduce ring D of protochlorophyllide (Pchlide) to form chlorophyllide a (Chlide). This reaction is light-independent. The L component serves as a unique electron donor to the NB-component of the complex, and binds Mg-ATP. The protein is Light-independent protochlorophyllide reductase iron-sulfur ATP-binding protein of Nostoc sp. (strain PCC 7120 / SAG 25.82 / UTEX 2576).